The sequence spans 89 residues: Signal recognition particle 19 kDa protein (89 aa).

This sequence belongs to the SRP19 family. Part of the signal recognition particle protein translocation system, which is composed of SRP and FtsY. Archaeal SRP consists of a 7S RNA molecule of 300 nucleotides and two protein subunits: SRP54 and SRP19.

Its subcellular location is the cytoplasm. Its function is as follows. Involved in targeting and insertion of nascent membrane proteins into the cytoplasmic membrane. Binds directly to 7S RNA and mediates binding of the 54 kDa subunit of the SRP. The protein is Signal recognition particle 19 kDa protein of Methanococcus maripaludis (strain DSM 14266 / JCM 13030 / NBRC 101832 / S2 / LL).